The chain runs to 198 residues: Holliday junction resolvase RecU (198 aa).

Residues 1–22 (MVNYPHKVSSQKRQTSLSQPKN) form a disordered region. The segment covering 11–22 (QKRQTSLSQPKN) has biased composition (polar residues). 4 residues coordinate Mg(2+): T81, D83, E96, and Q115.

It belongs to the RecU family. Requires Mg(2+) as cofactor.

The protein resides in the cytoplasm. It catalyses the reaction Endonucleolytic cleavage at a junction such as a reciprocal single-stranded crossover between two homologous DNA duplexes (Holliday junction).. Endonuclease that resolves Holliday junction intermediates in genetic recombination. Cleaves mobile four-strand junctions by introducing symmetrical nicks in paired strands. Promotes annealing of linear ssDNA with homologous dsDNA. Required for DNA repair, homologous recombination and chromosome segregation. The protein is Holliday junction resolvase RecU of Streptococcus pneumoniae (strain P1031).